The chain runs to 166 residues: Large ribosomal subunit protein uL10 (166 aa).

The protein belongs to the universal ribosomal protein uL10 family. As to quaternary structure, part of the ribosomal stalk of the 50S ribosomal subunit. The N-terminus interacts with L11 and the large rRNA to form the base of the stalk. The C-terminus forms an elongated spine to which L12 dimers bind in a sequential fashion forming a multimeric L10(L12)X complex.

Its function is as follows. Forms part of the ribosomal stalk, playing a central role in the interaction of the ribosome with GTP-bound translation factors. The chain is Large ribosomal subunit protein uL10 from Staphylococcus carnosus (strain TM300).